Here is a 44-residue protein sequence, read N- to C-terminus: pyr operon leader peptide (44 aa).

This chain is pyr operon leader peptide (pyrL), found in Shigella flexneri.